Here is a 336-residue protein sequence, read N- to C-terminus: Dihydroorotate dehydrogenase (quinone) (336 aa).

FMN-binding positions include 62-66 (AGLDK) and T86. K66 provides a ligand contact to substrate. A substrate-binding site is contributed by 111–115 (NRMGF). Positions 139 and 172 each coordinate FMN. N172 serves as a coordination point for substrate. S175 acts as the Nucleophile in catalysis. N177 contacts substrate. The FMN site is built by K217 and T245. 246–247 (NT) is a binding site for substrate. FMN contacts are provided by residues G268, G297, and 318-319 (YS).

This sequence belongs to the dihydroorotate dehydrogenase family. Type 2 subfamily. Monomer. It depends on FMN as a cofactor.

It localises to the cell membrane. It catalyses the reaction (S)-dihydroorotate + a quinone = orotate + a quinol. It functions in the pathway pyrimidine metabolism; UMP biosynthesis via de novo pathway; orotate from (S)-dihydroorotate (quinone route): step 1/1. Catalyzes the conversion of dihydroorotate to orotate with quinone as electron acceptor. This chain is Dihydroorotate dehydrogenase (quinone), found in Klebsiella pneumoniae (strain 342).